The sequence spans 532 residues: Spore coat protein SP85 (532 aa).

An N-terminal signal peptide occupies residues 1-19; it reads MRLLSVLLIGFLCLAGTYA. The N-linked (GlcNAc...) asparagine glycan is linked to Asn47. The disordered stretch occupies residues 197-265; that stretch reads TQSPTQPPTQ…PTQPPTQPPV (69 aa). Residues 201–263 are compositionally biased toward pro residues; the sequence is TQPPTQPPTY…YPPTQPPTQP (63 aa). A Follistatin-like 1 domain is found at 267 to 289; it reads DCSTLECPEGFHCEIVNNRRTCV. Residues 297–320 are disordered; sequence THPPTQSPTYPPTQPPTQPPTYPP. Follistatin-like domains lie at 335 to 359, 400 to 423, and 430 to 452; these read SCDNVRCPRGYHCECNHWENVARCV, TCDQVRCPRKHHCECNRKGQVFCV, and TCKQVGCPENHECVSRRGELHCV.

As to quaternary structure, binds to cotE. Post-translationally, O-glycosylated.

The protein localises to the spore wall. Functionally, required for incorporation of cotE into the spore coat and for the formation of the outer layer. Has a cross-bridging function between cellulose and other coat proteins. The chain is Spore coat protein SP85 (pspB) from Dictyostelium discoideum (Social amoeba).